The following is a 199-amino-acid chain: Recombination protein RecR (199 aa).

Residues 57 to 72 (CQSCRTFTEETYCPIC) form a C4-type zinc finger. One can recognise a Toprim domain in the interval 81 to 176 (EVICVVETPA…TVSRIAHGVP (96 aa)).

The protein belongs to the RecR family.

Its function is as follows. May play a role in DNA repair. It seems to be involved in an RecBC-independent recombinational process of DNA repair. It may act with RecF and RecO. The polypeptide is Recombination protein RecR (Shewanella pealeana (strain ATCC 700345 / ANG-SQ1)).